The chain runs to 279 residues: NAD kinase (279 aa).

Residue Asp63 is the Proton acceptor of the active site. NAD(+) contacts are provided by residues 63–64, Arg68, 133–134, and Asp163; these read DG and NE.

It belongs to the NAD kinase family. Requires a divalent metal cation as cofactor.

It is found in the cytoplasm. It carries out the reaction NAD(+) + ATP = ADP + NADP(+) + H(+). Its function is as follows. Involved in the regulation of the intracellular balance of NAD and NADP, and is a key enzyme in the biosynthesis of NADP. Catalyzes specifically the phosphorylation on 2'-hydroxyl of the adenosine moiety of NAD to yield NADP. This chain is NAD kinase, found in Protochlamydia amoebophila (strain UWE25).